The chain runs to 291 residues: tRNA dimethylallyltransferase (291 aa).

Residue 9 to 16 (GPTASGKT) participates in ATP binding. Substrate is bound at residue 11 to 16 (TASGKT). The interaction with substrate tRNA stretch occupies residues 34–37 (DSLQ).

The protein belongs to the IPP transferase family. In terms of assembly, monomer. It depends on Mg(2+) as a cofactor.

It carries out the reaction adenosine(37) in tRNA + dimethylallyl diphosphate = N(6)-dimethylallyladenosine(37) in tRNA + diphosphate. Functionally, catalyzes the transfer of a dimethylallyl group onto the adenine at position 37 in tRNAs that read codons beginning with uridine, leading to the formation of N6-(dimethylallyl)adenosine (i(6)A). This Aster yellows witches'-broom phytoplasma (strain AYWB) protein is tRNA dimethylallyltransferase.